Reading from the N-terminus, the 351-residue chain is Photosystem II D2 protein (351 aa).

A helical membrane pass occupies residues 39–59 (CAYMAIGGWLTGTTFATSWYT). Residue H116 coordinates chlorophyll a. Residues 123–139 (GFMLRQFEIARLVGVRP) form a helical membrane-spanning segment. The pheophytin a site is built by Q128 and N141. Residues 151–164 (LFVSVFLIYPLGQS) form a helical membrane-spanning segment. Residue H196 participates in chlorophyll a binding. The helical transmembrane segment at 206–226 (GALLCAIHGATVENTLFEDGD) threads the bilayer. H213 and F260 together coordinate a plastoquinone. H213 lines the Fe cation pocket. Fe cation is bound at residue H267. Residues 277 to 293 (GLWMSAIGVVGLALNLR) traverse the membrane as a helical segment.

The protein belongs to the reaction center PufL/M/PsbA/D family. PSII is composed of 1 copy each of membrane proteins PsbA, PsbB, PsbC, PsbD, PsbE, PsbF, PsbH, PsbI, PsbJ, PsbK, PsbL, PsbM, PsbT, PsbX, PsbY, PsbZ, Psb30/Ycf12, peripheral proteins PsbO, CyanoQ (PsbQ), PsbU, PsbV and a large number of cofactors. It forms dimeric complexes. The cofactor is The D1/D2 heterodimer binds P680, chlorophylls that are the primary electron donor of PSII, and subsequent electron acceptors. It shares a non-heme iron and each subunit binds pheophytin, quinone, additional chlorophylls, carotenoids and lipids. There is also a Cl(-1) ion associated with D1 and D2, which is required for oxygen evolution. The PSII complex binds additional chlorophylls, carotenoids and specific lipids..

The protein resides in the cellular thylakoid membrane. It carries out the reaction 2 a plastoquinone + 4 hnu + 2 H2O = 2 a plastoquinol + O2. Its function is as follows. Photosystem II (PSII) is a light-driven water:plastoquinone oxidoreductase that uses light energy to abstract electrons from H(2)O, generating O(2) and a proton gradient subsequently used for ATP formation. It consists of a core antenna complex that captures photons, and an electron transfer chain that converts photonic excitation into a charge separation. The D1/D2 (PsbA/PsbD) reaction center heterodimer binds P680, the primary electron donor of PSII as well as several subsequent electron acceptors. D2 is needed for assembly of a stable PSII complex. In Prochlorothrix hollandica, this protein is Photosystem II D2 protein.